Consider the following 114-residue polypeptide: Protein S100-A9 (114 aa).

Position 2 is a blocked amino end (Thr) (Thr2). Cys3 is modified (S-nitrosocysteine; transient). EF-hand domains are found at residues 12 to 47 (IETI…DLQN) and 54 to 89 (KNEK…LTWA). His20 contributes to the Zn(2+) binding site. The Ca(2+) site is built by Ser23, Leu26, and His28. Asp30 contacts Zn(2+). Residues Thr31, Glu36, Asp67, Asn69, Asp71, Gln73, and Glu78 each coordinate Ca(2+). Residues His91 and His95 each coordinate Zn(2+). The segment covering 93-102 (KMHEGDEGPG) has biased composition (basic and acidic residues). Residues 93–114 (KMHEGDEGPGHHHKPGLGEGTP) form a disordered region. His105 bears the Pros-methylhistidine mark. Thr113 is modified (phosphothreonine; by MAPK14).

As to quaternary structure, homodimer. Preferentially exists as a heterodimer or heterotetramer with S100A8 known as calprotectin (S100A8/A9). S100A9 interacts with ATP2A2. S100A9 interacts with AGER, and with the heterodimeric complex formed by TLR4 and LY96 in the presence of calcium and/or zinc ions. S100A9 binds quinoline-3-carboxamides in the presence of calcium and/or zinc ions. S100A9 interacts with amyloid-beta protein 40. Calprotectin (S100A8/9) interacts with CEACAM3 and tubulin filaments in a calcium-dependent manner. Heterotetrameric calprotectin (S100A8/A9) interacts with ANXA6 and associates with tubulin filaments in activated monocytes. Calprotectin (S100A8/9) interacts with NCF2/P67PHOX, RAC1, RAC2, CYBA and CYBB. Calprotectin (S100A8/9) interacts with NOS2 to form the iNOS-S100A8/A9 transnitrosylase complex; induced by LDL(ox). Calprotectin (S100A8/9) interacts with CD69. Phosphorylated. Phosphorylation inhibits activation of tubulin polymerization. Post-translationally, S-nitrosylation of Cys-3 is implicated in LDL(ox)-induced S-nitrosylation of GAPDH at 'Cys-247' through a transnitrosylase mechanism involving a iNOS-S100A8/9 complex. In terms of processing, methylation at His-105 by METTL9 reduces zinc-binding without affecting heterodimerization with S100A8. Calprotectin (S100A8/9) is predominantly expressed in myeloid cells. Except for inflammatory conditions, the expression is restricted to a specific stage of myeloid differentiation since both proteins are expressed in circulating neutrophils and monocytes but are absent in normal tissue macrophages and lymphocytes. Under chronic inflammatory conditions, such as psoriasis and malignant disorders, also expressed in the epidermis. Found in high concentrations at local sites of inflammation or in the serum of patients with inflammatory diseases such as rheumatoid, cystic fibrosis, inflammatory bowel disease, Crohn's disease, giant cell arteritis, cystic fibrosis, Sjogren's syndrome, systemic lupus erythematosus, and progressive systemic sclerosis. Involved in the formation and deposition of amyloids in the aging prostate known as corpora amylacea inclusions. Strongly up-regulated in many tumors, including gastric, esophageal, colon, pancreatic, bladder, ovarian, thyroid, breast and skin cancers.

The protein resides in the secreted. The protein localises to the cytoplasm. It is found in the cytoskeleton. Its subcellular location is the cell membrane. S100A9 is a calcium- and zinc-binding protein which plays a prominent role in the regulation of inflammatory processes and immune response. It can induce neutrophil chemotaxis, adhesion, can increase the bactericidal activity of neutrophils by promoting phagocytosis via activation of SYK, PI3K/AKT, and ERK1/2 and can induce degranulation of neutrophils by a MAPK-dependent mechanism. Predominantly found as calprotectin (S100A8/A9) which has a wide plethora of intra- and extracellular functions. The intracellular functions include: facilitating leukocyte arachidonic acid trafficking and metabolism, modulation of the tubulin-dependent cytoskeleton during migration of phagocytes and activation of the neutrophilic NADPH-oxidase. Also participates in regulatory T-cell differentiation together with CD69. Activates NADPH-oxidase by facilitating the enzyme complex assembly at the cell membrane, transferring arachidonic acid, an essential cofactor, to the enzyme complex and S100A8 contributes to the enzyme assembly by directly binding to NCF2/P67PHOX. The extracellular functions involve pro-inflammatory, antimicrobial, oxidant-scavenging and apoptosis-inducing activities. Its pro-inflammatory activity includes recruitment of leukocytes, promotion of cytokine and chemokine production, and regulation of leukocyte adhesion and migration. Acts as an alarmin or a danger associated molecular pattern (DAMP) molecule and stimulates innate immune cells via binding to pattern recognition receptors such as Toll-like receptor 4 (TLR4) and receptor for advanced glycation endproducts (AGER). Binding to TLR4 and AGER activates the MAP-kinase and NF-kappa-B signaling pathways resulting in the amplification of the pro-inflammatory cascade. Has antimicrobial activity towards bacteria and fungi and exerts its antimicrobial activity probably via chelation of Zn(2+) which is essential for microbial growth. Can induce cell death via autophagy and apoptosis and this occurs through the cross-talk of mitochondria and lysosomes via reactive oxygen species (ROS) and the process involves BNIP3. Can regulate neutrophil number and apoptosis by an anti-apoptotic effect; regulates cell survival via ITGAM/ITGB and TLR4 and a signaling mechanism involving MEK-ERK. Its role as an oxidant scavenger has a protective role in preventing exaggerated tissue damage by scavenging oxidants. Can act as a potent amplifier of inflammation in autoimmunity as well as in cancer development and tumor spread. Has transnitrosylase activity; in oxidatively-modified low-densitity lipoprotein (LDL(ox))-induced S-nitrosylation of GAPDH on 'Cys-247' proposed to transfer the NO moiety from NOS2/iNOS to GAPDH via its own S-nitrosylated Cys-3. The iNOS-S100A8/A9 transnitrosylase complex is proposed to also direct selective inflammatory stimulus-dependent S-nitrosylation of multiple targets such as ANXA5, EZR, MSN and VIM by recognizing a [IL]-x-C-x-x-[DE] motif. In Homo sapiens (Human), this protein is Protein S100-A9.